The sequence spans 335 residues: PA-phosphatase related-family protein DDB_G0275547 (335 aa).

The next 6 membrane-spanning stretches (helical) occupy residues 43-63 (VMYL…GILF), 93-113 (VLIP…SLIV), 124-144 (ILGL…FKCF), 202-222 (SITA…FKIF), 226-246 (GHIF…LIGI), and 254-274 (HTFL…LSCY).

This sequence belongs to the PA-phosphatase related phosphoesterase family.

The protein localises to the membrane. This chain is PA-phosphatase related-family protein DDB_G0275547, found in Dictyostelium discoideum (Social amoeba).